We begin with the raw amino-acid sequence, 2013 residues long: Cell adhesion molecule DSCAM (2013 aa).

A signal peptide spans 1 to 17 (MWILALSLFQSFANVFS). Topologically, residues 19–1594 (EPHSSLYFVN…EGLTTNEGLK (1576 aa)) are extracellular. Ig-like C2-type domains follow at residues 20–119 (PHSS…VHIK), 125–216 (PYTV…ARLF), 225–305 (PSIL…AKVI), 313–401 (PLKA…VQVV), 407–500 (PKII…ARIN), 504–592 (PASI…VHVT), 596–685 (PPFI…SQLI), 690–783 (PKFV…MYLT), and 787–883 (PAMI…LTVQ). Disulfide bonds link Cys46-Cys102, Cys145-Cys197, Cys246-Cys293, Cys335-Cys385, Cys428-Cys484, Cys525-Cys575, Cys617-Cys669, Cys711-Cys766, and Cys809-Cys865. Asn78 is a glycosylation site (N-linked (GlcNAc...) asparagine). An N-linked (GlcNAc...) asparagine glycan is attached at Asn470. The N-linked (GlcNAc...) asparagine glycan is linked to Asn666. Fibronectin type-III domains follow at residues 885 to 982 (PPDP…ADEA), 987 to 1086 (PPQE…TLED), 1091 to 1187 (PPEN…TKED), and 1191 to 1285 (PPAG…AKAP). Residues Asn1160 and Asn1250 are each glycosylated (N-linked (GlcNAc...) asparagine). In terms of domain architecture, Ig-like C2-type 10 spans 1285-1377 (PARILTFSGT…DEIILNLQVQ (93 aa)). An intrachain disulfide couples Cys1307 to Cys1359. 2 consecutive Fibronectin type-III domains span residues 1379–1473 (PPDQ…TLGK) and 1474–1575 (EPQF…TIPP). Residues 1595–1615 (ILVTISCILVGVLLLFVLLLV) traverse the membrane as a helical segment. Residues 1616-2013 (VRRRRREQRL…NPYAKSYTLV (398 aa)) are Cytoplasmic-facing. The required for netrin-mediated axon repulsion of neuronal growth cones stretch occupies residues 1616-2013 (VRRRRREQRL…NPYAKSYTLV (398 aa)). Disordered regions lie at residues 1718–1809 (LVDV…SASS) and 1920–2013 (RDLS…YTLV). Positions 1799–1809 (SSMVSTESASS) are enriched in low complexity. Positions 1949-1968 (EASSSTSSTREGQQSWQQGA) are enriched in polar residues.

Homodimer; mediates homophilic interactions to promote cell adhesion. Interacts with DCC; the interaction is abolished in response to NTN1. Interacts (via extracellular domain) with NTN1. Interacts (via extracellular domain) with UNC5C (via Ig-like C2-type domain). Interacts with PTK2. Interacts with FYN. Post-translationally, phosphorylated at tyrosine residues. Phosphorylation is enhanced by NTN1.

It localises to the cell membrane. The protein localises to the cell projection. Its subcellular location is the axon. The protein resides in the dendrite. It is found in the growth cone. It localises to the synapse. Functionally, cell adhesion molecule that plays a role in neuronal self-avoidance. Promotes repulsion between specific neuronal processes of either the same cell or the same subtype of cells. Mediates within retinal amacrine and ganglion cell subtypes both isoneuronal self-avoidance for creating an orderly dendritic arborization and heteroneuronal self-avoidance to maintain the mosaic spacing between amacrine and ganglion cell bodies. Receptor for netrin required for axon guidance independently of and in collaboration with the receptor DCC. Might also collaborate with UNC5C in NTN1-mediated axon repulsion independently of DCC. In spinal cord development plays a role in guiding commissural axons projection and pathfinding across the ventral midline to reach the floor plate upon ligand binding. Mediates intracellular signaling by stimulating the activation of MAPK8 and MAP kinase p38. Adhesion molecule that promotes lamina-specific synaptic connections in the retina: expressed in specific subsets of interneurons and retinal ganglion cells (RGCs) and promotes synaptic connectivity via homophilic interactions. The sequence is that of Cell adhesion molecule DSCAM (Dscam) from Rattus norvegicus (Rat).